The primary structure comprises 466 residues: Glutamate--tRNA ligase 2 (466 aa).

The 'HIGH' region signature appears at 9 to 19; the sequence is PSPTGYLHVGG. Positions 234-238 match the 'KMSKS' region motif; it reads PLSKR. K237 contributes to the ATP binding site.

Belongs to the class-I aminoacyl-tRNA synthetase family. Glutamate--tRNA ligase type 1 subfamily. Monomer.

The protein resides in the cytoplasm. It carries out the reaction tRNA(Glu) + L-glutamate + ATP = L-glutamyl-tRNA(Glu) + AMP + diphosphate. Catalyzes the attachment of glutamate to tRNA(Glu) in a two-step reaction: glutamate is first activated by ATP to form Glu-AMP and then transferred to the acceptor end of tRNA(Glu). The chain is Glutamate--tRNA ligase 2 from Pseudothermotoga lettingae (strain ATCC BAA-301 / DSM 14385 / NBRC 107922 / TMO) (Thermotoga lettingae).